The primary structure comprises 162 residues: Mitochondrial intermembrane space import and assembly protein 40 homolog (162 aa).

The interval 1 to 61 (MGQAQSDENS…DNENESLEAK (61 aa)) is disordered. Positions 9–18 (NSIPTTTTTN) are enriched in low complexity. 3 disulfides stabilise this stretch: C68–C70, C79–C112, and C89–C102. Residues 76 to 120 (NGSCGSQFSEAFLCFLKSTAEEKGSDCVNPFVALQSCINANPDAF) enclose the CHCH domain. 2 consecutive short sequence motifs (cx9C motif) follow at residues 79–89 (CGSQFSEAFLC) and 102–112 (CVNPFVALQSC). Residues 119 to 162 (AFSKSVTGDEKETEKKEEQPPVQDHRIIPPLWAKDPPRSGNSKL) are disordered. Residues 125–145 (TGDEKETEKKEEQPPVQDHRI) show a composition bias toward basic and acidic residues.

Its subcellular location is the mitochondrion intermembrane space. The protein resides in the peroxisome matrix. Functionally, required for the import and folding of small cysteine-containing proteins in the mitochondrial intermembrane space. Involved in the mitochondrial oxidative folding of the copper-zinc superoxide dismutase CSD1, the copper chaperone for superoxide dismutase CCS, and subunits of the mitochondrial membrane respiratory chain NADH dehydrogenase (Complex I). Involved in the peroxisomal oxidative folding of the copper-zinc superoxide dismutase CSD3, and the fatty acid beta-oxidation multifunctional protein AIM1. The sequence is that of Mitochondrial intermembrane space import and assembly protein 40 homolog from Arabidopsis thaliana (Mouse-ear cress).